The sequence spans 68 residues: Erythrodihydroneopterin triphosphate synthetase (68 aa).

Ser66 is subject to Phosphoserine.

This Cavia porcellus (Guinea pig) protein is Erythrodihydroneopterin triphosphate synthetase.